Consider the following 699-residue polypeptide: Long-chain-fatty-acid--CoA ligase 1 (699 aa).

N-acetylmethionine is present on M1. The residue at position 9 (Y9) is a 3'-nitrotyrosine. Residues 25–45 traverse the membrane as a helical; Signal-anchor for type III membrane protein segment; sequence LPTNTLMGFGAFAALTTFWYA. Residues 46–699 lie on the Cytoplasmic side of the membrane; the sequence is TRPKALKPPC…IDELYATIKI (654 aa). Residue Y85 is modified to Phosphotyrosine. Residue Y86 is modified to 3'-nitrotyrosine. S136 carries O-linked (GlcNAc) serine glycosylation. Residues K208, K357, and K387 each carry the N6-acetyllysine modification. Phosphoserine is present on S621. An N6-acetyllysine modification is found at K633.

The protein belongs to the ATP-dependent AMP-binding enzyme family. The cofactor is Mg(2+).

The protein localises to the mitochondrion outer membrane. It is found in the peroxisome membrane. It localises to the microsome membrane. The protein resides in the endoplasmic reticulum membrane. The catalysed reaction is a long-chain fatty acid + ATP + CoA = a long-chain fatty acyl-CoA + AMP + diphosphate. It carries out the reaction (5Z,8Z,11Z,14Z)-eicosatetraenoate + ATP + CoA = (5Z,8Z,11Z,14Z)-eicosatetraenoyl-CoA + AMP + diphosphate. The enzyme catalyses 3,7,11,15-tetramethylhexadecanoate + ATP + CoA = phytanoyl-CoA + AMP + diphosphate. It catalyses the reaction hexadecanoate + ATP + CoA = hexadecanoyl-CoA + AMP + diphosphate. The catalysed reaction is (E)-hexadec-2-enoate + ATP + CoA = (2E)-hexadecenoyl-CoA + AMP + diphosphate. It carries out the reaction 2,6,10,14-tetramethylpentadecanoate + ATP + CoA = pristanoyl-CoA + AMP + diphosphate. The enzyme catalyses 14,15-epoxy-(5Z,8Z,11Z)-eicosatrienoate + ATP + CoA = 14,15-epoxy-(5Z,8Z,11Z)-eicosatrienoyl-CoA + AMP + diphosphate. It catalyses the reaction 5-hydroxy-(6E,8Z,11Z,14Z)-eicosatetraenoate + ATP + CoA = 5-hydroxy-(6E,8Z,11Z,14Z)-eicosatetraenoyl-CoA + AMP + diphosphate. The catalysed reaction is 12-hydroxy-(5Z,8Z,10E,14Z)-eicosatetraenoate + ATP + CoA = 12-hydroxy-(5Z,8Z,10E,14Z)-eicosatetraenoyl-CoA + AMP + diphosphate. It carries out the reaction 15-hydroxy-(5Z,8Z,11Z,13E)-eicosatetraenoate + ATP + CoA = 15-hydroxy-(5Z,8Z,11Z,13E)-eicosatetraenoyl-CoA + AMP + diphosphate. The enzyme catalyses (9Z)-octadecenoate + ATP + CoA = (9Z)-octadecenoyl-CoA + AMP + diphosphate. Its activity is regulated as follows. Inhibited at high temperature and by arachidonate. Catalyzes the conversion of long-chain fatty acids to their active form acyl-CoAs for both synthesis of cellular lipids, and degradation via beta-oxidation. Preferentially uses palmitoleate, oleate and linoleate. Preferentially activates arachidonate than epoxyeicosatrienoic acids (EETs) or hydroxyeicosatrienoic acids (HETEs). This Mus musculus (Mouse) protein is Long-chain-fatty-acid--CoA ligase 1.